The chain runs to 491 residues: Probable polygalacturonase (491 aa).

Residues 15-35 (PIVSFYCFQVVSVLVAVVLLL) form a helical membrane-spanning segment. N-linked (GlcNAc...) asparagine glycosylation is found at asparagine 165, asparagine 175, and asparagine 214. 4 PbH1 repeats span residues 230-256 (SRNILIQGITILAPVRSPNTDGINPDS), 257-278 (CTNTRIEDCYIVSGDDCVAVKS), 319-340 (IQDVRAEDIVAINSESGIRIKT), and 348-369 (VKDIYVRGMTMKTMKWAFWMTG). Aspartate 271 (proton donor) is an active-site residue. N-linked (GlcNAc...) asparagine glycans are attached at residues asparagine 399 and asparagine 421.

It belongs to the glycosyl hydrolase 28 family.

The protein resides in the membrane. It catalyses the reaction (1,4-alpha-D-galacturonosyl)n+m + H2O = (1,4-alpha-D-galacturonosyl)n + (1,4-alpha-D-galacturonosyl)m.. This Vitis vinifera (Grape) protein is Probable polygalacturonase.